Consider the following 161-residue polypeptide: Transcription elongation factor GreB (161 aa).

The protein belongs to the GreA/GreB family. GreB subfamily.

Necessary for efficient RNA polymerase transcription elongation past template-encoded arresting sites. The arresting sites in DNA have the property of trapping a certain fraction of elongating RNA polymerases that pass through, resulting in locked ternary complexes. Cleavage of the nascent transcript by cleavage factors such as GreA or GreB allows the resumption of elongation from the new 3'terminus. GreB releases sequences of up to 9 nucleotides in length. The chain is Transcription elongation factor GreB from Vibrio cholerae serotype O1 (strain ATCC 39315 / El Tor Inaba N16961).